The chain runs to 454 residues: MDEADRQLLRRCRVRLVSELQVAELWDALLSRELFTRDMIEDIQQAGSGSRRDQARQLVTDLETRGRQALPLFISCLEDTGQGTLASLLQSGRQAAKQDPEAVKPLDHLVPVVLGPMGLTAKEQRVVKLDPSQPAVGNLTPVVLGPEELWPARLKPEVLRPETPRPVDIGSGGAHDVCVPGKIRGHADMAYTLDSDPCGHCLIINNVNFCPSSGLGTRTGSNLDRDKLEHRFRWLRFMVEVKNDLTAKKMVTALMEMAHRNHRALDCFVVVILSHGCQASHLQFPGAVYGTDGCSVSIEKIVNIFNGSGCPSLGGKPKLFFIQACGGEQKDHGFEVACTSSQGRTLDSDSEPDAVPYQEGPRPLDQLDAVSSLPTPSDILVSYSTFPGFVSWRDKKSGSWYIETLDGILEQWARSEDLQSLLLRVANAVSAKGTYKQIPGCFNFLRKKLFFKTS.

The CARD domain maps to 1–92 (MDEADRQLLR…GTLASLLQSG (92 aa)). A Phosphothreonine; by MAPK1 modification is found at threonine 163. Tyrosine 191 carries the phosphotyrosine; by ABL1 modification. Active-site residues include histidine 275 and cysteine 325. Phosphoserine is present on residues serine 340 and serine 348. A propeptide spanning residues 354–367 (AVPYQEGPRPLDQL) is cleaved from the precursor.

This sequence belongs to the peptidase C14A family. In terms of assembly, heterotetramer that consists of two anti-parallel arranged heterodimers, each one formed by a 35 kDa (p35) and a 10 kDa (p10) subunit. Caspase-9 and APAF1 bind to each other via their respective NH2-terminal CED-3 homologous domains in the presence of cytochrome C and ATP. Interacts (inactive form) with EFHD2. Interacts with HAX1. Interacts with BIRC2/c-IAP1, XIAP/BIRC4, BIRC5/survivin, BIRC6/bruce and BIRC7/livin. Interacts with ABL1 (via SH3 domain); the interaction is direct and increased in the response of cells to genotoxic stress and ABL1/c-Abl activation. Interacts with BCL2L10. In terms of processing, cleavages at Asp-353 by granzyme B and at Asp-368 by caspase-3 generate the two active subunits. Caspase-8 and -10 can also be involved in these processing events. Post-translationally, phosphorylated at Thr-163 by MAPK1/ERK2. Phosphorylation at Thr-163 is sufficient to block caspase-9 processing and subsequent caspase-3 activation. Phosphorylation on Tyr-191 by ABL1/c-Abl; occurs in the response of cells to DNA damage. Ubiquitinated by BIRC6; this activity is inhibited by DIABLO/SMAC.

The catalysed reaction is Strict requirement for an Asp residue at position P1 and with a marked preference for His at position P2. It has a preferred cleavage sequence of Leu-Gly-His-Asp-|-Xaa.. Inhibited by BIRC6; following inhibition of BIRC6-caspase binding by DIABLO/SMAC, BIRC6 is subjected to caspase cleavage, leading to an increase in active caspases. Its function is as follows. Involved in the activation cascade of caspases responsible for apoptosis execution. Binding of caspase-9 to Apaf-1 leads to activation of the protease which then cleaves and activates effector caspases caspase-3 (CASP3) or caspase-7 (CASP7). Promotes DNA damage-induced apoptosis in a ABL1/c-Abl-dependent manner. Proteolytically cleaves poly(ADP-ribose) polymerase (PARP). Cleaves BIRC6 following inhibition of BIRC6-caspase binding by DIABLO/SMAC. The sequence is that of Caspase-9 (Casp9) from Mus musculus (Mouse).